We begin with the raw amino-acid sequence, 528 residues long: U3 small nucleolar RNA-associated protein 15 homolog (528 aa).

N-acetylalanine is present on Ala2. WD repeat units follow at residues 36-75 (KEFG…PVKT), 78-117 (RFKD…PLRQ), 120-159 (GHTK…EILT), 162-202 (EHSD…NVLC), 204-242 (EHGQ…QLLV), 246-285 (NHHK…VVHS), and 287-326 (DYAA…KKTS). Lys249 is covalently cross-linked (Glycyl lysine isopeptide (Lys-Gly) (interchain with G-Cter in SUMO2)). Residues 496-528 (RNDSDPVPEHVPAELPEEKTESPTQPSDTDKNS) form a disordered region. Basic and acidic residues predominate over residues 497-516 (NDSDPVPEHVPAELPEEKTE).

In terms of assembly, part of the small subunit (SSU) processome, composed of more than 70 proteins and the RNA chaperone small nucleolar RNA (snoRNA) U3. May be a component of the proposed t-UTP subcomplex of the ribosomal small subunit (SSU) processome containing at least UTP4, WDR43, HEATR1, UTP15, WDR75. Interacts directly with UTP4 and WDR43.

It is found in the nucleus. The protein localises to the nucleolus. In terms of biological role, ribosome biogenesis factor. Involved in nucleolar processing of pre-18S ribosomal RNA. Required for optimal pre-ribosomal RNA transcription by RNA polymerase I. Part of the small subunit (SSU) processome, first precursor of the small eukaryotic ribosomal subunit. During the assembly of the SSU processome in the nucleolus, many ribosome biogenesis factors, an RNA chaperone and ribosomal proteins associate with the nascent pre-rRNA and work in concert to generate RNA folding, modifications, rearrangements and cleavage as well as targeted degradation of pre-ribosomal RNA by the RNA exosome. The sequence is that of U3 small nucleolar RNA-associated protein 15 homolog (Utp15) from Mus musculus (Mouse).